Here is a 114-residue protein sequence, read N- to C-terminus: Cytochrome c2 (114 aa).

Q1 bears the Pyrrolidone carboxylic acid mark. C13, C16, H17, and M93 together coordinate heme c.

It belongs to the cytochrome c family. Post-translationally, binds 1 heme c group covalently per subunit.

It is found in the periplasm. Functionally, cytochrome c2 is found mainly in purple, non-sulfur, photosynthetic bacteria where it functions as the electron donor to the oxidized bacteriochlorophyll in the photophosphorylation pathway. However, it may also have a role in the respiratory chain and is found in some non-photosynthetic bacteria. The sequence is that of Cytochrome c2 from Rhodopseudomonas palustris.